Consider the following 158-residue polypeptide: 6,7-dimethyl-8-ribityllumazine synthase (158 aa).

5-amino-6-(D-ribitylamino)uracil contacts are provided by residues phenylalanine 24, 58 to 60, and 82 to 84; these read AFE and AVI. 87-88 contributes to the (2S)-2-hydroxy-3-oxobutyl phosphate binding site; the sequence is GT. Histidine 90 acts as the Proton donor in catalysis. Phenylalanine 115 is a binding site for 5-amino-6-(D-ribitylamino)uracil. (2S)-2-hydroxy-3-oxobutyl phosphate is bound at residue arginine 129.

The protein belongs to the DMRL synthase family. In terms of assembly, forms an icosahedral capsid composed of 60 subunits, arranged as a dodecamer of pentamers.

It catalyses the reaction (2S)-2-hydroxy-3-oxobutyl phosphate + 5-amino-6-(D-ribitylamino)uracil = 6,7-dimethyl-8-(1-D-ribityl)lumazine + phosphate + 2 H2O + H(+). It participates in cofactor biosynthesis; riboflavin biosynthesis; riboflavin from 2-hydroxy-3-oxobutyl phosphate and 5-amino-6-(D-ribitylamino)uracil: step 1/2. Catalyzes the formation of 6,7-dimethyl-8-ribityllumazine by condensation of 5-amino-6-(D-ribitylamino)uracil with 3,4-dihydroxy-2-butanone 4-phosphate. This is the penultimate step in the biosynthesis of riboflavin. In Azotobacter vinelandii (strain DJ / ATCC BAA-1303), this protein is 6,7-dimethyl-8-ribityllumazine synthase.